A 233-amino-acid polypeptide reads, in one-letter code: Small ribosomal subunit protein uS3 (233 aa).

Positions 39–107 (VRQFLNKELE…PAQINIAEVR (69 aa)) constitute a KH type-2 domain.

The protein belongs to the universal ribosomal protein uS3 family. In terms of assembly, part of the 30S ribosomal subunit. Forms a tight complex with proteins S10 and S14.

Functionally, binds the lower part of the 30S subunit head. Binds mRNA in the 70S ribosome, positioning it for translation. This Edwardsiella ictaluri (strain 93-146) protein is Small ribosomal subunit protein uS3.